The sequence spans 420 residues: Phosphoribosylamine--glycine ligase (420 aa).

The ATP-grasp domain occupies 108–314; the sequence is KEIMVKYGVS…FAQNITDILD (207 aa). 134–195 lines the ATP pocket; the sequence is IEKHGAPIVV…EEFLEGEEFS (62 aa). Residues E284 and N286 each coordinate Mg(2+).

Belongs to the GARS family. Requires Mg(2+) as cofactor. Mn(2+) serves as cofactor.

It catalyses the reaction 5-phospho-beta-D-ribosylamine + glycine + ATP = N(1)-(5-phospho-beta-D-ribosyl)glycinamide + ADP + phosphate + H(+). It participates in purine metabolism; IMP biosynthesis via de novo pathway; N(1)-(5-phospho-D-ribosyl)glycinamide from 5-phospho-alpha-D-ribose 1-diphosphate: step 2/2. In Streptococcus pneumoniae (strain ATCC BAA-255 / R6), this protein is Phosphoribosylamine--glycine ligase.